Here is a 327-residue protein sequence, read N- to C-terminus: PDZ and LIM domain protein 1 (327 aa).

The residue at position 2 (threonine 2) is an N-acetylthreonine. The region spanning 3 to 85 is the PDZ domain; sequence TQQIVLQGPG…NMTLTVSRSE (83 aa). Phosphoserine is present on residues serine 90 and serine 130. Phosphotyrosine is present on tyrosine 142. A disordered region spans residues 161 to 186; sequence VESKTSASGEEANSRPSAQPHPSGGL. In terms of domain architecture, LIM zinc-binding spans 256–315; it reads PICDKCGTGIVGVFVKLRDHHRHPECYVCTDCGINLKQKGHFFVGDQIYCEKHARERVTP. Zn(2+)-binding residues include cysteine 258, cysteine 261, histidine 278, cysteine 281, cysteine 284, cysteine 287, cysteine 305, and histidine 308. Threonine 314 carries the post-translational modification Phosphothreonine. At tyrosine 319 the chain carries Phosphotyrosine.

As to quaternary structure, interacts with ACTN1. Interacts with ACTN2 and ACTN4. Interacts with PDLIM4. In terms of tissue distribution, expressed most abundantly in heart, lung and liver, moderately in spleen and skeletal muscle, and at extremely low levels (if at all) in testis and brain tissues.

The protein localises to the cytoplasm. It is found in the cytoskeleton. It localises to the myofibril. Its subcellular location is the sarcomere. The protein resides in the z line. Cytoskeletal protein that may act as an adapter that brings other proteins (like kinases) to the cytoskeleton. Involved in assembly, disassembly and directioning of stress fibers in fibroblasts. Required for the localization of ACTN1 and PALLD to stress fibers. Required for cell migration and in maintaining cell polarity of fibroblasts. The sequence is that of PDZ and LIM domain protein 1 (Pdlim1) from Rattus norvegicus (Rat).